Consider the following 1164-residue polypeptide: IgA FC receptor (1164 aa).

An N-terminal signal peptide occupies residues 1 to 37 (MFKSNYERKMRYSIRKFSVGVASVAVASLFMGSVAHA). Disordered stretches follow at residues 54–75 (KPYP…ELET) and 167–220 (HEEV…EDKD). The segment covering 59-73 (MAQTDQGNNSSSSEL) has biased composition (polar residues). Composition is skewed to basic and acidic residues over residues 167-176 (HEEVEKDKKA) and 183-220 (KQSD…EDKD). IgA-binding regions lie at residues 199–438 (NHQK…KIEL) and 439–826 (TVSP…ETNT). The Ig-like domain occupies 434–534 (QKIELTVSPE…VEKTFTITVQ (101 aa)). The span at 536-564 (KEEKQVPKTPEQKDSKTEEKVPQEPKSND) shows a compositional bias: basic and acidic residues. 2 disordered regions span residues 536–567 (KEEK…DKNQ) and 823–947 (ETNT…PDGL). The segment covering 911-920 (PKIPEPPKTP) has biased composition (pro residues). The LPXTG sorting signal signature appears at 1132–1136 (LPYTG). T1135 is modified (pentaglycyl murein peptidoglycan amidated threonine). The propeptide at 1136–1164 (GVASNLVLEIMGLLGLIGTSFIAMKRRKS) is removed by sortase.

It localises to the secreted. The protein localises to the cell wall. In Streptococcus agalactiae, this protein is IgA FC receptor (bag).